The following is a 259-amino-acid chain: ATP synthase subunit a (259 aa).

5 helical membrane-spanning segments follow: residues 29–49 (TVNIDSMIFSVILGALFIWIF), 90–110 (IAPLALTVFIWVFLMNLMDLI), 134–154 (DVNITMSMALGVFALIIIYSI), 208–228 (LVFILIAGLLPWWSQWLLSVP), and 230–250 (ALFHILVITLQAFIFMVLTIV).

It belongs to the ATPase A chain family. As to quaternary structure, F-type ATPases have 2 components, CF(1) - the catalytic core - and CF(0) - the membrane proton channel. CF(1) has five subunits: alpha(3), beta(3), gamma(1), delta(1), epsilon(1). CF(0) has three main subunits: a(1), b(2) and c(9-12). The alpha and beta chains form an alternating ring which encloses part of the gamma chain. CF(1) is attached to CF(0) by a central stalk formed by the gamma and epsilon chains, while a peripheral stalk is formed by the delta and b chains.

It is found in the cell inner membrane. Key component of the proton channel; it plays a direct role in the translocation of protons across the membrane. In Aeromonas salmonicida (strain A449), this protein is ATP synthase subunit a.